Reading from the N-terminus, the 1085-residue chain is MADEELVKKMVRAVLQSSKSGLSLSDLQVEYKDLTGELIPYKQLGYVTLDALLHSMPSIVKLDKGQSGEVMCHATTGNEMAHITKLAARQRTAKKTGRPQVVNCQMRVKPAAPLVLNAKPRTSLRQPDHRGRLGRGGGRGHGDTRTGCMRDPQLDGKGGRPHNTPPNTPSRKPSLPSERPEKRMTLPSRFQKEVHAHILRNPQHINVPSNLNENTTPPKPRLPHSAPYSPKLVQSRLQEVLNKHSNGLWVSKLPQLYREHYKQDLPSEALKELENWTHICTVEKPCSSKPQELLLYPAKETSQITPTPTHDRSPSHHKKPQTQRPSLTAKSNTPESPKALSPDLKQKLGELLLKYSSGLWAHALPKLYQDTYKCKLPEFVLDQLTLLSDICTIDYPVPDNPKRAILYAKVVEDENRNQSGLAGQEMKLERRLSSQTVPPLVIPRVEYPSVLVVDASDTNCVILRYIGEGYSKAQEKLEDEMREFYRQDNTKMALRSPSPGQLTAVGAEEEDDIIRAQVCEVMADKVKVYYVDHGFSEVISIRKLFELNEKFYRLPFQATKCKLAGLESFSQEQAVLKKLESIATGKILLAEILEREDMPLVVLYDTSQDDDVNINAACMKALQDRSLESPLKVNSAYMNVSVTSVCSDGTIYCQVPSRGLTKLNEILEKTENYFHSQVTSESLVSRPFCGKNCLARYKGKWSRVEITNLHGSRVLDILFVDVGVQASVEVIELREIPPPLLRDLISTPAQALKCCLAGLPVSVGLWTPDAVQWLRDTVLHISDCSLKIAKVDETKRLAHVYLFTSKNFHDTSCSLNQQLADSDLWNHQKDVFLSSRGPLKSLNVPTATQTSSLKTDRGDKALHTPKKTSPPLGSKSTPAGSPPERLSLPPALELPEIGQNMDVFVSVACHPGHFVLQPWQDMYKLVVLMGEMILHYNKMEEKALKVEKNQVCAAKVENNWYRVLVKGVLTNGLVSVFQLDYGKHELVSGTKLRPLTQEFCQLPFQAITAQLAGLKPRQWSEEASIVFRNHVEKKPLVAQLESVQEASQPWERKVMIYLVDTSQEERDIWLHDIMAEFTDEMTKTA.

In terms of domain architecture, HTH OST-type 1 spans Asp3–Thr76. Disordered stretches follow at residues Ala112–Arg183, Arg200–Tyr228, and Pro297–Ser341. The span at Gln203–Thr216 shows a compositional bias: polar residues. Residues Ser229–Lys299 form the HTH OST-type 2 domain. The span at Thr322–Glu335 shows a compositional bias: polar residues. The region spanning Leu340–Val410 is the HTH OST-type 3 domain. 2 Tudor domains span residues Ser496–Leu554 and Arg686–Asp743. Residues Asn843–Leu853 show a composition bias toward polar residues. The tract at residues Asn843–Leu888 is disordered.

It is found in the cytoplasm. In terms of biological role, component of specific cytoplasmic RNA granules involved in post-transcriptional regulation of specific genes: probably acts by binding to specific mRNAs and regulating their translation. Probably required during spermatogenesis. The polypeptide is Tudor domain-containing protein 7B (tdrd7b) (Danio rerio (Zebrafish)).